A 103-amino-acid polypeptide reads, in one-letter code: Large ribosomal subunit protein eL14 (103 aa).

It belongs to the eukaryotic ribosomal protein eL14 family.

The protein is Large ribosomal subunit protein eL14 of Pyrobaculum calidifontis (strain DSM 21063 / JCM 11548 / VA1).